The chain runs to 286 residues: Uridylate cyclase (286 aa).

Residues 90–223 form the Guanylate cyclase domain; it reads TAIFVDIRKS…DAVTKAANMS (134 aa). Residue phenylalanine 93 coordinates a ribonucleoside 5'-triphosphate. Mn(2+) is bound by residues aspartate 95, isoleucine 96, and aspartate 140.

It belongs to the adenylyl cyclase class-4/guanylyl cyclase family. Pyrimidine cyclase subfamily. As to quaternary structure, homodimer. Mn(2+) is required as a cofactor.

The protein resides in the cytoplasm. It catalyses the reaction UTP = 3',5'-cyclic UMP + diphosphate. Pycsar (pyrimidine cyclase system for antiphage resistance) provides immunity against bacteriophage. The pyrimidine cyclase (PycC) synthesizes cyclic nucleotides in response to infection; these serve as specific second messenger signals. The signals activate the adjacent effector, leading to bacterial cell death and abortive phage infection. A clade C Pycsar system. Its function is as follows. The pyrimidine cyclase gene of a two-gene Pycsar system, weakly generates cyclic UMP (cUMP) from UTP, has little to no activity on ATP, CTP or GTP. Expression of this and adjacent effector TpPycTM (AC A0A1T4LJG1) probably confers resistance to bacteriophage. The genes are probably only expressed in response to bacteriophage infection. This Treponema porcinum protein is Uridylate cyclase.